We begin with the raw amino-acid sequence, 119 residues long: uncharacterized protein (119 aa).

C13 is a catalytic residue.

This sequence belongs to the ArsC family.

This is an uncharacterized protein from Escherichia coli (strain K12).